Consider the following 60-residue polypeptide: Small, acid-soluble spore protein C2 (60 aa).

The protein belongs to the alpha/beta-type SASP family. In terms of processing, SASP are degraded in the first minutes of spore germination and provide amino acids for both new protein synthesis and metabolism.

In terms of biological role, SASP are bound to spore DNA. They are double-stranded DNA-binding proteins that cause DNA to change to an a-like conformation. They protect the DNA backbone from chemical and enzymatic cleavage and are thus involved in dormant spore's high resistance to UV light. The chain is Small, acid-soluble spore protein C2 (sspC2) from Clostridium perfringens (strain 13 / Type A).